The following is a 464-amino-acid chain: Probable glycine dehydrogenase (decarboxylating) subunit 1 (464 aa).

The protein belongs to the GcvP family. N-terminal subunit subfamily. The glycine cleavage system is composed of four proteins: P, T, L and H. In this organism, the P 'protein' is a heterodimer of two subunits.

The enzyme catalyses N(6)-[(R)-lipoyl]-L-lysyl-[glycine-cleavage complex H protein] + glycine + H(+) = N(6)-[(R)-S(8)-aminomethyldihydrolipoyl]-L-lysyl-[glycine-cleavage complex H protein] + CO2. The glycine cleavage system catalyzes the degradation of glycine. The P protein binds the alpha-amino group of glycine through its pyridoxal phosphate cofactor; CO(2) is released and the remaining methylamine moiety is then transferred to the lipoamide cofactor of the H protein. This chain is Probable glycine dehydrogenase (decarboxylating) subunit 1, found in Thiobacillus denitrificans (strain ATCC 25259 / T1).